We begin with the raw amino-acid sequence, 348 residues long: Phosphate acyltransferase (348 aa).

This sequence belongs to the PlsX family. In terms of assembly, homodimer. Probably interacts with PlsY.

The protein localises to the cytoplasm. The catalysed reaction is a fatty acyl-[ACP] + phosphate = an acyl phosphate + holo-[ACP]. Its pathway is lipid metabolism; phospholipid metabolism. Its function is as follows. Catalyzes the reversible formation of acyl-phosphate (acyl-PO(4)) from acyl-[acyl-carrier-protein] (acyl-ACP). This enzyme utilizes acyl-ACP as fatty acyl donor, but not acyl-CoA. This chain is Phosphate acyltransferase, found in Synechocystis sp. (strain ATCC 27184 / PCC 6803 / Kazusa).